A 174-amino-acid polypeptide reads, in one-letter code: Larval cuticle protein LCP-22 (174 aa).

A signal peptide spans 1–16; sequence MKFAVVFACMVAAVAA. The region spanning 82–153 is the Chitin-binding type R&amp;R domain; it reads DGSYTYFYET…PTGNAIPTSP (72 aa).

Its function is as follows. Component of the cuticle of the larva of Bombyx mori. This Bombyx mori (Silk moth) protein is Larval cuticle protein LCP-22 (LCP22).